The following is a 658-amino-acid chain: UvrABC system protein B (658 aa).

Residues Q25–R416 enclose the Helicase ATP-binding domain. Position 38–45 (G38–T45) interacts with ATP. A Beta-hairpin motif is present at residues H91–I114. Positions A433–S607 constitute a Helicase C-terminal domain. One can recognise a UVR domain in the interval E623–M658.

Belongs to the UvrB family. Forms a heterotetramer with UvrA during the search for lesions. Interacts with UvrC in an incision complex.

Its subcellular location is the cytoplasm. Its function is as follows. The UvrABC repair system catalyzes the recognition and processing of DNA lesions. A damage recognition complex composed of 2 UvrA and 2 UvrB subunits scans DNA for abnormalities. Upon binding of the UvrA(2)B(2) complex to a putative damaged site, the DNA wraps around one UvrB monomer. DNA wrap is dependent on ATP binding by UvrB and probably causes local melting of the DNA helix, facilitating insertion of UvrB beta-hairpin between the DNA strands. Then UvrB probes one DNA strand for the presence of a lesion. If a lesion is found the UvrA subunits dissociate and the UvrB-DNA preincision complex is formed. This complex is subsequently bound by UvrC and the second UvrB is released. If no lesion is found, the DNA wraps around the other UvrB subunit that will check the other stand for damage. This Helicobacter hepaticus (strain ATCC 51449 / 3B1) protein is UvrABC system protein B.